A 584-amino-acid chain; its full sequence is ATP-dependent RNA helicase MRH4, mitochondrial (584 aa).

The transit peptide at 1–49 (MQPVFSRFPYASKSGFISLASRGYAVSRNSGSSIKSNLRSKPRADTRWN) directs the protein to the mitochondrion. Polar residues predominate over residues 28-39 (RNSGSSIKSNLR). The interval 28-92 (RNSGSSIKSN…QTQQQFQYGE (65 aa)) is disordered. The span at 63-79 (GKGDHRSHSRSDSRAKP) shows a compositional bias: basic and acidic residues. The Q motif motif lies at 162–169 (HLKPSPIQ). The Helicase ATP-binding domain maps to 179–366 (TLMDPQLQVR…TRLFPTVGVI (188 aa)). 192–199 (AETGSGKT) contacts ATP. A DEAD box motif is present at residues 314-317 (DEAD). Residues 397-584 (ALAQILYSIN…SIVSKNVSIS (188 aa)) form the Helicase C-terminal domain.

This sequence belongs to the DEAD box helicase family. MRH4 subfamily.

It is found in the mitochondrion. The enzyme catalyses ATP + H2O = ADP + phosphate + H(+). Its function is as follows. ATP-binding RNA helicase involved in mitochondrial RNA metabolism. Required for maintenance of mitochondrial DNA. This Kluyveromyces lactis (strain ATCC 8585 / CBS 2359 / DSM 70799 / NBRC 1267 / NRRL Y-1140 / WM37) (Yeast) protein is ATP-dependent RNA helicase MRH4, mitochondrial (MRH4).